Here is a 443-residue protein sequence, read N- to C-terminus: Glucose-6-phosphate isomerase (443 aa).

Residue Glu-285 is the Proton donor of the active site. Catalysis depends on residues His-306 and Lys-420.

The protein belongs to the GPI family.

The protein resides in the cytoplasm. The enzyme catalyses alpha-D-glucose 6-phosphate = beta-D-fructose 6-phosphate. It participates in carbohydrate biosynthesis; gluconeogenesis. It functions in the pathway carbohydrate degradation; glycolysis; D-glyceraldehyde 3-phosphate and glycerone phosphate from D-glucose: step 2/4. Functionally, catalyzes the reversible isomerization of glucose-6-phosphate to fructose-6-phosphate. This chain is Glucose-6-phosphate isomerase, found in Staphylococcus aureus (strain Mu3 / ATCC 700698).